The chain runs to 712 residues: Ribosomal RNA large subunit methyltransferase K/L (712 aa).

Residues 42–153 form the THUMP domain; the sequence is QALRIVMWSR…KGRASLSIDL (112 aa).

This sequence belongs to the methyltransferase superfamily. RlmKL family.

The protein localises to the cytoplasm. The catalysed reaction is guanosine(2445) in 23S rRNA + S-adenosyl-L-methionine = N(2)-methylguanosine(2445) in 23S rRNA + S-adenosyl-L-homocysteine + H(+). It catalyses the reaction guanosine(2069) in 23S rRNA + S-adenosyl-L-methionine = N(2)-methylguanosine(2069) in 23S rRNA + S-adenosyl-L-homocysteine + H(+). Functionally, specifically methylates the guanine in position 2445 (m2G2445) and the guanine in position 2069 (m7G2069) of 23S rRNA. This chain is Ribosomal RNA large subunit methyltransferase K/L, found in Stenotrophomonas maltophilia (strain R551-3).